We begin with the raw amino-acid sequence, 573 residues long: Proline--tRNA ligase (573 aa).

It belongs to the class-II aminoacyl-tRNA synthetase family. ProS type 1 subfamily. Homodimer.

It localises to the cytoplasm. The catalysed reaction is tRNA(Pro) + L-proline + ATP = L-prolyl-tRNA(Pro) + AMP + diphosphate. Functionally, catalyzes the attachment of proline to tRNA(Pro) in a two-step reaction: proline is first activated by ATP to form Pro-AMP and then transferred to the acceptor end of tRNA(Pro). As ProRS can inadvertently accommodate and process non-cognate amino acids such as alanine and cysteine, to avoid such errors it has two additional distinct editing activities against alanine. One activity is designated as 'pretransfer' editing and involves the tRNA(Pro)-independent hydrolysis of activated Ala-AMP. The other activity is designated 'posttransfer' editing and involves deacylation of mischarged Ala-tRNA(Pro). The misacylated Cys-tRNA(Pro) is not edited by ProRS. This is Proline--tRNA ligase from Elusimicrobium minutum (strain Pei191).